We begin with the raw amino-acid sequence, 811 residues long: U-box domain-containing protein 43 (811 aa).

The region spanning 24–103 (NIYEAFICPL…EEWRARNDAL (80 aa)) is the U-box domain. ARM repeat units follow at residues 136–175 (RKIR…VVVE), 178–217 (EESK…ELSK), 220–261 (ALCE…NLER), 263–302 (EENV…VLAL), 303–342 (NNDV…NISS), 344–388 (EGSA…NIVN), 399–438 (GPHH…GLTS), 444–484 (INVV…NISP), and 489–528 (ELAN…LLAE).

The catalysed reaction is S-ubiquitinyl-[E2 ubiquitin-conjugating enzyme]-L-cysteine + [acceptor protein]-L-lysine = [E2 ubiquitin-conjugating enzyme]-L-cysteine + N(6)-ubiquitinyl-[acceptor protein]-L-lysine.. It functions in the pathway protein modification; protein ubiquitination. In terms of biological role, functions as an E3 ubiquitin ligase. The sequence is that of U-box domain-containing protein 43 (PUB43) from Arabidopsis thaliana (Mouse-ear cress).